Here is a 1050-residue protein sequence, read N- to C-terminus: Toluene efflux pump membrane transporter TtgB (1050 aa).

A run of 12 helical transmembrane segments spans residues 10 to 30 (IFAW…ILKL), 339 to 359 (GVIH…YLFL), 370 to 390 (MTVP…GFSI), 393 to 413 (LTMF…IVVV), 440 to 460 (GALV…AFFG), 472 to 492 (ITIV…TPAL), 539 to 559 (VPFL…FARI), 871 to 891 (MPAL…ALYE), 893 to 913 (WSIP…ALIA), 923 to 943 (VYFL…AILI), 972 to 992 (IIMT…ASGA), and 1004 to 1024 (VIGG…LFFV).

This sequence belongs to the resistance-nodulation-cell division (RND) (TC 2.A.6) family.

The protein resides in the cell inner membrane. The inner membrane transporter component of a constitutive organic solvent efflux system. Involved in export of toluene, styrene, m-xylene, propylbenzene and ethylbenzene. Also exports AMP and the antibiotics carbenicillin, nalidixic acid, chloramphenicol and tetracycline. The protein is Toluene efflux pump membrane transporter TtgB (ttgB) of Pseudomonas putida (strain DOT-T1E).